The following is a 648-amino-acid chain: DNA gyrase subunit B (648 aa).

A Toprim domain is found at 433 to 547 (SELYIVEGDS…KGHVYIAQPP (115 aa)). The Mg(2+) site is built by Glu439, Asp512, and Asp514.

It belongs to the type II topoisomerase GyrB family. In terms of assembly, heterotetramer, composed of two GyrA and two GyrB chains. In the heterotetramer, GyrA contains the active site tyrosine that forms a transient covalent intermediate with DNA, while GyrB binds cofactors and catalyzes ATP hydrolysis. It depends on Mg(2+) as a cofactor. The cofactor is Mn(2+). Ca(2+) is required as a cofactor.

It is found in the cytoplasm. The catalysed reaction is ATP-dependent breakage, passage and rejoining of double-stranded DNA.. A type II topoisomerase that negatively supercoils closed circular double-stranded (ds) DNA in an ATP-dependent manner to modulate DNA topology and maintain chromosomes in an underwound state. Negative supercoiling favors strand separation, and DNA replication, transcription, recombination and repair, all of which involve strand separation. Also able to catalyze the interconversion of other topological isomers of dsDNA rings, including catenanes and knotted rings. Type II topoisomerases break and join 2 DNA strands simultaneously in an ATP-dependent manner. In Mycoplasmoides gallisepticum (strain R(low / passage 15 / clone 2)) (Mycoplasma gallisepticum), this protein is DNA gyrase subunit B.